We begin with the raw amino-acid sequence, 778 residues long: Preaspterpenacid I synthase sttA (778 aa).

The sesterterpenoid synthase stretch occupies residues 4 to 359; sequence ISDVMKHCVP…RYHRTDLATT (356 aa). Aspartate 105 contributes to the Mg(2+) binding site. Aspartate 105 serves as a coordination point for substrate. A substrate region spans residues 211 to 214; sequence RVNE. Substrate is bound at residue asparagine 255. Substrate regions lie at residues 259-263 and 350-351; these read SFPKE and RY. Residues 360-774 are geranylfarneyl diphosphate synthase; sequence AEDRATLIGK…RMMLLGMGPK (415 aa). Residues 423–445 are disordered; it reads AFKKSNPRNGKQNGTEGSKGTFT. Residues 429 to 445 are compositionally biased toward polar residues; it reads PRNGKQNGTEGSKGTFT. Isopentenyl diphosphate contacts are provided by lysine 493, arginine 496, and histidine 525. Residues aspartate 532 and aspartate 536 each coordinate Mg(2+). A dimethylallyl diphosphate-binding site is contributed by arginine 541. Position 542 (arginine 542) interacts with isopentenyl diphosphate. The dimethylallyl diphosphate site is built by lysine 619, threonine 620, glutamine 657, asparagine 664, and lysine 674.

It in the N-terminal section; belongs to the terpene synthase family. In the C-terminal section; belongs to the FPP/GGPP synthase family.

It carries out the reaction 4 isopentenyl diphosphate + dimethylallyl diphosphate = (2E,6E,10E,14E)-geranylfarnesyl diphosphate + 4 diphosphate. The enzyme catalyses (2E,6E,10E,14E)-geranylfarnesyl diphosphate + H2O = preaspterpenacid acid I + diphosphate. Its pathway is secondary metabolite biosynthesis; terpenoid biosynthesis. Sesterterpenoid synthase; part of the gene cluster that mediates the biosynthesis of aspterpenacids. Performs both prenyl transferase and terpene cyclase activity, converting isopentenyl diphosphate and dimethylallyl diphosphate into geranylfarnesyl diphosphate (GFPP) and then converting GFPP into preaspterpenacid I. C22-oxidative modification of preaspterpenacid I by the cytochrome P450 monooxygenase sttB then leads to preaspterpenacid II. It has still to be determined how preaspterpenacid II is further modified to produce aspterpenacids. This chain is Preaspterpenacid I synthase sttA, found in Aspergillus terreus.